A 78-amino-acid chain; its full sequence is Translation initiation factor IF-1, chloroplastic (78 aa).

An S1-like domain is found at 1-73 (MASNRELIEM…TKGRIIYRLR (73 aa)).

Belongs to the IF-1 family. Component of the 30S ribosomal translation pre-initiation complex which assembles on the 30S ribosome in the order IF-2 and IF-3, IF-1 and N-formylmethionyl-tRNA(fMet); mRNA recruitment can occur at any time during PIC assembly.

Its subcellular location is the plastid. The protein resides in the chloroplast. Functionally, one of the essential components for the initiation of protein synthesis. Stabilizes the binding of IF-2 and IF-3 on the 30S subunit to which N-formylmethionyl-tRNA(fMet) subsequently binds. Helps modulate mRNA selection, yielding the 30S pre-initiation complex (PIC). Upon addition of the 50S ribosomal subunit IF-1, IF-2 and IF-3 are released leaving the mature 70S translation initiation complex. This Ostreococcus tauri protein is Translation initiation factor IF-1, chloroplastic.